Here is a 261-residue protein sequence, read N- to C-terminus: Lipase LipV (261 aa).

Serine 87 serves as the catalytic Nucleophile. Active-site charge relay system residues include aspartate 217 and histidine 240.

It belongs to the AB hydrolase superfamily.

It carries out the reaction a carboxylic ester + H2O = an alcohol + a carboxylate + H(+). It catalyses the reaction a tetradecanoate ester + H2O = an aliphatic alcohol + tetradecanoate + H(+). The catalysed reaction is decanoate ester + H2O = decanoate + an aliphatic alcohol + H(+). The enzyme catalyses an octanoate ester + H2O = an aliphatic alcohol + octanoate + H(+). It carries out the reaction a dodecanoate ester + H2O = an aliphatic alcohol + dodecanoate + H(+). It catalyses the reaction a butanoate ester + H2O = an aliphatic alcohol + butanoate + H(+). The catalysed reaction is hexadecanoate ester + H2O = an aliphatic alcohol + hexadecanoate + H(+). The enzyme catalyses octadecanoate ester + H2O = an aliphatic alcohol + octadecanoate + H(+). Is inhibited by tetrahydrolipstatin, a specific lipase inhibitor and RHC 80267, a diacylglycerol lipase inhibitor, but not by phenylglyoxal and iodoacetate. Functionally, lipase that displays broad substrate specificity and preferentially hydrolyzes p-nitrophenyl myristate in vitro. Also shows significant activity with pNP-butyrate (68%), pNP-octanoate (82%), pNP-decanoate (90%), and pNP-laurate (74%). Is probably involved in lipid catabolism. Is active at low pH, and might play some important role in mycobacterial biology in macrophages where the bacteria encounters acidic stress. The polypeptide is Lipase LipV (Mycobacterium tuberculosis (strain ATCC 25618 / H37Rv)).